Consider the following 197-residue polypeptide: dTTP/UTP pyrophosphatase (197 aa).

D70 acts as the Proton acceptor in catalysis.

This sequence belongs to the Maf family. YhdE subfamily. The cofactor is a divalent metal cation.

It is found in the cytoplasm. The catalysed reaction is dTTP + H2O = dTMP + diphosphate + H(+). It carries out the reaction UTP + H2O = UMP + diphosphate + H(+). Functionally, nucleoside triphosphate pyrophosphatase that hydrolyzes dTTP and UTP. May have a dual role in cell division arrest and in preventing the incorporation of modified nucleotides into cellular nucleic acids. The protein is dTTP/UTP pyrophosphatase (yceF2) of Shigella boydii serotype 4 (strain Sb227).